The chain runs to 343 residues: N-acetyl-gamma-glutamyl-phosphate reductase (343 aa).

Residue Cys146 is part of the active site.

Belongs to the NAGSA dehydrogenase family. Type 1 subfamily.

The protein localises to the cytoplasm. The enzyme catalyses N-acetyl-L-glutamate 5-semialdehyde + phosphate + NADP(+) = N-acetyl-L-glutamyl 5-phosphate + NADPH + H(+). The protein operates within amino-acid biosynthesis; L-arginine biosynthesis; N(2)-acetyl-L-ornithine from L-glutamate: step 3/4. In terms of biological role, catalyzes the NADPH-dependent reduction of N-acetyl-5-glutamyl phosphate to yield N-acetyl-L-glutamate 5-semialdehyde. The sequence is that of N-acetyl-gamma-glutamyl-phosphate reductase from Pseudarthrobacter chlorophenolicus (strain ATCC 700700 / DSM 12829 / CIP 107037 / JCM 12360 / KCTC 9906 / NCIMB 13794 / A6) (Arthrobacter chlorophenolicus).